Reading from the N-terminus, the 180-residue chain is Chromosome-anchoring protein RacA (180 aa).

Residues 5–25 constitute a DNA-binding region (H-T-H motif); that stretch reads TPFIAKKLGVSPKAVVRIAQQ. The stretch at 67–151 forms a coiled coil; it reads KASSNEVEEL…LEAALTKEEP (85 aa).

The protein belongs to the RacA family.

The protein localises to the cytoplasm. In terms of biological role, required for the formation of axial filaments and for anchoring the origin regions at the cell poles in sporulating cells, thus ensuring proper chromosome segregation in the prespore. Binds in a dispersed manner throughout the chromosome but preferentially to sites clustered in the origin portion of the chromosome, causing condensation of the chromosome and its remodeling into an elongated, anchored structure. In Bacillus cereus (strain B4264), this protein is Chromosome-anchoring protein RacA.